We begin with the raw amino-acid sequence, 118 residues long: Ribosome-binding factor A (118 aa).

The protein belongs to the RbfA family. As to quaternary structure, monomer. Binds 30S ribosomal subunits, but not 50S ribosomal subunits or 70S ribosomes.

It is found in the cytoplasm. Functionally, one of several proteins that assist in the late maturation steps of the functional core of the 30S ribosomal subunit. Associates with free 30S ribosomal subunits (but not with 30S subunits that are part of 70S ribosomes or polysomes). Required for efficient processing of 16S rRNA. May interact with the 5'-terminal helix region of 16S rRNA. The protein is Ribosome-binding factor A of Clostridium beijerinckii (strain ATCC 51743 / NCIMB 8052) (Clostridium acetobutylicum).